Here is a 648-residue protein sequence, read N- to C-terminus: Siderophore transporter MYCGRDRAFT_70577 (648 aa).

Basic and acidic residues-rich tracts occupy residues 1–11 (MRTSSESHSRS) and 29–46 (SASK…DTSI). The tract at residues 1–58 (MRTSSESHSRSDAFNGKNDASQVTVDSDSASKDHHDHDHHHKDTSINERQSQHVHQQA) is disordered. Residues 47 to 58 (NERQSQHVHQQA) show a composition bias toward polar residues. Transmembrane regions (helical) follow at residues 79-99 (LLLY…ALDQ), 151-171 (VVVL…QGLA), 205-225 (AFWS…NGFI), 236-256 (WGLG…IWTL), 303-323 (LIGL…LNLA), 336-356 (IAML…EALL), 409-429 (TIFI…GGLI), 438-458 (TLMV…LDGN), 468-488 (LAVS…ARVG), 500-520 (VVIS…STIA), and 578-598 (GIIL…SCLM).

This sequence belongs to the major facilitator superfamily.

Its subcellular location is the cell membrane. Its function is as follows. Siderophore transporter; part of the gene cluster 14 that mediates the biosynthesis of a ferrichrome A-like siderophors which may contribute to organismal virulence. This Zymoseptoria tritici (strain CBS 115943 / IPO323) (Speckled leaf blotch fungus) protein is Siderophore transporter MYCGRDRAFT_70577.